A 102-amino-acid polypeptide reads, in one-letter code: Small ribosomal subunit protein bS6 (102 aa).

Belongs to the bacterial ribosomal protein bS6 family.

In terms of biological role, binds together with bS18 to 16S ribosomal RNA. In Solidesulfovibrio magneticus (strain ATCC 700980 / DSM 13731 / RS-1) (Desulfovibrio magneticus), this protein is Small ribosomal subunit protein bS6.